Here is a 317-residue protein sequence, read N- to C-terminus: Inositol oxygenase 2 (317 aa).

Residues Arg57 and Asp115–Ser117 each bind substrate. Residues His128, His153, and Asp154 each coordinate Fe cation. Substrate-binding positions include Lys157 and Gly174 to Asp175. Fe cation contacts are provided by His226, His252, and Asp285. His252–Ser253 serves as a coordination point for substrate.

The protein belongs to the myo-inositol oxygenase family. Requires Fe cation as cofactor. Expressed mainly in roots, stems, flowers and siliques. Low expression in leaves.

It localises to the cytoplasm. The catalysed reaction is myo-inositol + O2 = D-glucuronate + H2O + H(+). It functions in the pathway polyol metabolism; myo-inositol degradation into D-glucuronate; D-glucuronate from myo-inositol: step 1/1. In terms of biological role, involved in the biosynthesis of UDP-glucuronic acid (UDP-GlcA), providing nucleotide sugars for cell-wall polymers. May be also involved in plant ascorbate biosynthesis. The protein is Inositol oxygenase 2 (MIOX2) of Arabidopsis thaliana (Mouse-ear cress).